The chain runs to 128 residues: MAFSFPDHFRFADSHEYAFADDALVRIGISEFAVDQLGDIVFVDLPEEGTAIAKGESFGSVESVKAVEDMYAPVSGEIVHRNNSVLASPEELQNDPHGEGWLLIIRPDNPAQLTELMDSETYSKKISA.

Residues Leu-24 to Arg-106 form the Lipoyl-binding domain. Lys-65 is subject to N6-lipoyllysine.

This sequence belongs to the GcvH family. In terms of assembly, the glycine cleavage system is composed of four proteins: P, T, L and H. It depends on (R)-lipoate as a cofactor.

The glycine cleavage system catalyzes the degradation of glycine. The H protein shuttles the methylamine group of glycine from the P protein to the T protein. The sequence is that of Glycine cleavage system H protein from Prochlorococcus marinus (strain NATL1A).